Here is a 430-residue protein sequence, read N- to C-terminus: Adenylosuccinate synthetase (430 aa).

GTP-binding positions include 12–18 (GDEGKGK) and 40–42 (GHT). The active-site Proton acceptor is D13. 2 residues coordinate Mg(2+): D13 and G40. IMP is bound by residues 13–16 (DEGK), 38–41 (NAGH), T129, R143, Q224, T239, and R303. The active-site Proton donor is H41. 299–305 (ATTGRRR) contributes to the substrate binding site. GTP is bound by residues R305, 331–333 (KLD), and 413–415 (SVG).

This sequence belongs to the adenylosuccinate synthetase family. In terms of assembly, homodimer. Requires Mg(2+) as cofactor.

It is found in the cytoplasm. It carries out the reaction IMP + L-aspartate + GTP = N(6)-(1,2-dicarboxyethyl)-AMP + GDP + phosphate + 2 H(+). Its pathway is purine metabolism; AMP biosynthesis via de novo pathway; AMP from IMP: step 1/2. Functionally, plays an important role in the de novo pathway of purine nucleotide biosynthesis. Catalyzes the first committed step in the biosynthesis of AMP from IMP. In Desulfatibacillum aliphaticivorans, this protein is Adenylosuccinate synthetase.